A 365-amino-acid polypeptide reads, in one-letter code: Anthranilate phosphoribosyltransferase (365 aa).

5-phospho-alpha-D-ribose 1-diphosphate-binding positions include Gly96, 99-100 (GD), Thr104, 106-109 (NIST), 124-132 (KHGNRSVSS), and Ser136. Position 96 (Gly96) interacts with anthranilate. Ser108 contributes to the Mg(2+) binding site. Residue Asn127 coordinates anthranilate. Arg182 is an anthranilate binding site. Mg(2+) is bound by residues Asp240 and Glu241.

The protein belongs to the anthranilate phosphoribosyltransferase family. In terms of assembly, homodimer. Requires Mg(2+) as cofactor.

The catalysed reaction is N-(5-phospho-beta-D-ribosyl)anthranilate + diphosphate = 5-phospho-alpha-D-ribose 1-diphosphate + anthranilate. Its pathway is amino-acid biosynthesis; L-tryptophan biosynthesis; L-tryptophan from chorismate: step 2/5. Functionally, catalyzes the transfer of the phosphoribosyl group of 5-phosphorylribose-1-pyrophosphate (PRPP) to anthranilate to yield N-(5'-phosphoribosyl)-anthranilate (PRA). This is Anthranilate phosphoribosyltransferase from Colwellia psychrerythraea (strain 34H / ATCC BAA-681) (Vibrio psychroerythus).